Reading from the N-terminus, the 396-residue chain is S-adenosylmethionine synthase (396 aa).

An ATP-binding site is contributed by His16. Asp18 is a binding site for Mg(2+). Glu44 contacts K(+). Residues Glu57 and Gln100 each contribute to the L-methionine site. The interval 100–110 (QSPDINQGVDR) is flexible loop. Residues 165-167 (DAK), Asp240, 246-247 (RK), Ala263, and Lys267 each bind ATP. L-methionine is bound at residue Asp240. Lys271 is an L-methionine binding site.

This sequence belongs to the AdoMet synthase family. In terms of assembly, homotetramer; dimer of dimers. It depends on Mg(2+) as a cofactor. K(+) serves as cofactor.

The protein resides in the cytoplasm. The catalysed reaction is L-methionine + ATP + H2O = S-adenosyl-L-methionine + phosphate + diphosphate. It participates in amino-acid biosynthesis; S-adenosyl-L-methionine biosynthesis; S-adenosyl-L-methionine from L-methionine: step 1/1. In terms of biological role, catalyzes the formation of S-adenosylmethionine (AdoMet) from methionine and ATP. The overall synthetic reaction is composed of two sequential steps, AdoMet formation and the subsequent tripolyphosphate hydrolysis which occurs prior to release of AdoMet from the enzyme. The chain is S-adenosylmethionine synthase from Pseudomonas fluorescens (strain ATCC BAA-477 / NRRL B-23932 / Pf-5).